We begin with the raw amino-acid sequence, 268 residues long: Myeloid leukemia factor 1 (268 aa).

Phosphoserine is present on residues Ser-8, Ser-32, and Ser-34. Disordered regions lie at residues 44–66 (ISDG…SLTH) and 209–268 (GRHN…SNKK). The tract at residues 50-125 (RAHNRRGHND…IGDEPPKVFQ (76 aa)) is interaction with COPS3. 2 stretches are compositionally biased toward basic and acidic residues: residues 56 to 65 (GHNDGEDSLT) and 226 to 237 (PGSRELKRREKP).

Belongs to the MLF family. Interacts with CENPU. Also interacts with NRBP1/MADM, YWHAZ/14-3-3-zeta and HNRPUL2/MANP. NRBP1 recruits a serine kinase which phosphorylates both itself and MLF1. Phosphorylated MLF1 then binds to YWHAZ and is retained in the cytoplasm. Retained in the nucleus by binding to HNRPUL2. Binds to COPS3/CSN3 which is required for suppression of COP1 and activation of p53. Phosphorylation is required for binding to YWHAZ. Most abundant in testis, ovary, skeletal muscle, heart, kidney and colon. Low expression in spleen, thymus and peripheral blood leukocytes.

The protein localises to the cytoplasm. It is found in the nucleus. Its subcellular location is the cell projection. The protein resides in the cilium. It localises to the cytoskeleton. The protein localises to the cilium basal body. Involved in lineage commitment of primary hemopoietic progenitors by restricting erythroid formation and enhancing myeloid formation. Interferes with erythropoietin-induced erythroid terminal differentiation by preventing cells from exiting the cell cycle through suppression of CDKN1B/p27Kip1 levels. Suppresses COP1 activity via CSN3 which activates p53 and induces cell cycle arrest. Binds DNA and affects the expression of a number of genes so may function as a transcription factor in the nucleus. This chain is Myeloid leukemia factor 1 (MLF1), found in Homo sapiens (Human).